Consider the following 362-residue polypeptide: 3-dehydroquinate synthase (362 aa).

Residues 71 to 76 (DGEQYK), 105 to 109 (GVVGD), 129 to 130 (TT), lysine 142, lysine 151, and 169 to 172 (CLKT) each bind NAD(+). The Zn(2+) site is built by glutamate 184, histidine 247, and histidine 264.

Belongs to the sugar phosphate cyclases superfamily. Dehydroquinate synthase family. It depends on Co(2+) as a cofactor. Zn(2+) is required as a cofactor. Requires NAD(+) as cofactor.

It localises to the cytoplasm. The catalysed reaction is 7-phospho-2-dehydro-3-deoxy-D-arabino-heptonate = 3-dehydroquinate + phosphate. It functions in the pathway metabolic intermediate biosynthesis; chorismate biosynthesis; chorismate from D-erythrose 4-phosphate and phosphoenolpyruvate: step 2/7. Functionally, catalyzes the conversion of 3-deoxy-D-arabino-heptulosonate 7-phosphate (DAHP) to dehydroquinate (DHQ). This Shigella boydii serotype 18 (strain CDC 3083-94 / BS512) protein is 3-dehydroquinate synthase.